Here is a 208-residue protein sequence, read N- to C-terminus: MNRKNIAKGKLVRRFGINIFEQPKYDKLLKKKPNPPGMHGRSRRAKITEYGKQLIEKQKVKFTYGISERQLTNIFKEARRQHGVTGDNLLALLERRIDNVVYRAGFAISRAHARQIVSHGIIMLNGRRVTIPSITLRANDIIQVKEKDSLKKLVRSNIEKTSTLRKLPTWIEVNADDLNVKITRPPSRDEIPTLANEQMIVEYYSKRA.

The 63-residue stretch at 95–157 (RRIDNVVYRA…DSLKKLVRSN (63 aa)) folds into the S4 RNA-binding domain.

The protein belongs to the universal ribosomal protein uS4 family. In terms of assembly, part of the 30S ribosomal subunit. Contacts protein S5. The interaction surface between S4 and S5 is involved in control of translational fidelity.

One of the primary rRNA binding proteins, it binds directly to 16S rRNA where it nucleates assembly of the body of the 30S subunit. In terms of biological role, with S5 and S12 plays an important role in translational accuracy. The protein is Small ribosomal subunit protein uS4 of Borrelia hermsii (strain HS1 / DAH).